A 220-amino-acid chain; its full sequence is Putative O-methyltransferase Mmcs_3995 (220 aa).

Residues Val47, Glu69, 71–72 (GT), Ser77, Asp95, and Val96 each bind S-adenosyl-L-methionine. Asp143 provides a ligand contact to substrate. Asp145 contributes to the S-adenosyl-L-methionine binding site.

Belongs to the class I-like SAM-binding methyltransferase superfamily. Cation-dependent O-methyltransferase family.

The sequence is that of Putative O-methyltransferase Mmcs_3995 from Mycobacterium sp. (strain MCS).